A 166-amino-acid chain; its full sequence is Cytochrome b (166 aa).

4 helical membrane passes run 15 to 35, 77 to 97, 109 to 129, and 136 to 156; these read FKDI…VLIN, LGGV…PFYN, INQI…WIGA, and YVLL…INPL.

The protein belongs to the cytochrome b family. The main subunits of complex b-c1 are: cytochrome b, cytochrome c1 and the Rieske protein. Requires heme as cofactor.

It is found in the mitochondrion inner membrane. In terms of biological role, component of the ubiquinol-cytochrome c reductase complex (complex III or cytochrome b-c1 complex) that is part of the mitochondrial respiratory chain. The b-c1 complex mediates electron transfer from ubiquinol to cytochrome c. Contributes to the generation of a proton gradient across the mitochondrial membrane that is then used for ATP synthesis. In Drosophila subobscura (Fruit fly), this protein is Cytochrome b (mt:Cyt-b).